The primary structure comprises 447 residues: tRNA-2-methylthio-N(6)-dimethylallyladenosine synthase (447 aa).

One can recognise an MTTase N-terminal domain in the interval 8 to 126 (KKVVTLAYGC…FQRLLEEAEE (119 aa)). Residues C17, C53, C87, C162, C166, and C169 each contribute to the [4Fe-4S] cluster site. A Radical SAM core domain is found at 148 to 378 (AKGKLKAYVN…ITVQNAQSLA (231 aa)). Residues 381-444 (QEMIGKTCEV…SWTLFGECRA (64 aa)) enclose the TRAM domain.

This sequence belongs to the methylthiotransferase family. MiaB subfamily. As to quaternary structure, monomer. [4Fe-4S] cluster serves as cofactor.

Its subcellular location is the cytoplasm. The enzyme catalyses N(6)-dimethylallyladenosine(37) in tRNA + (sulfur carrier)-SH + AH2 + 2 S-adenosyl-L-methionine = 2-methylsulfanyl-N(6)-dimethylallyladenosine(37) in tRNA + (sulfur carrier)-H + 5'-deoxyadenosine + L-methionine + A + S-adenosyl-L-homocysteine + 2 H(+). Its function is as follows. Catalyzes the methylthiolation of N6-(dimethylallyl)adenosine (i(6)A), leading to the formation of 2-methylthio-N6-(dimethylallyl)adenosine (ms(2)i(6)A) at position 37 in tRNAs that read codons beginning with uridine. This chain is tRNA-2-methylthio-N(6)-dimethylallyladenosine synthase, found in Desulfitobacterium hafniense (strain Y51).